Here is a 424-residue protein sequence, read N- to C-terminus: Histidine--tRNA ligase (424 aa).

This sequence belongs to the class-II aminoacyl-tRNA synthetase family. As to quaternary structure, homodimer.

It localises to the cytoplasm. It carries out the reaction tRNA(His) + L-histidine + ATP = L-histidyl-tRNA(His) + AMP + diphosphate + H(+). The chain is Histidine--tRNA ligase from Yersinia pestis bv. Antiqua (strain Antiqua).